The chain runs to 360 residues: BLOC-1-related complex subunit 6 (360 aa).

The tract at residues 1–201 (MEAAQGRLGP…TGAGGGRRAT (201 aa)) is disordered. The span at 23–33 (ATFSGRPSRTP) shows a compositional bias: polar residues. Residue Thr41 is modified to Phosphothreonine. Ser130 is modified (phosphoserine). The segment covering 144–155 (EGDDDDDEDEEA) has biased composition (acidic residues). A Phosphoserine modification is found at Ser173. Residues 179–198 (GACGGGGSSSSGETGAGGGR) show a composition bias toward gly residues. The residue at position 201 (Thr201) is a Phosphothreonine. Position 204 is a phosphoserine (Ser204).

This sequence belongs to the BORCS6 family. Component of the BLOC-one-related complex (BORC) which is composed of BLOC1S1, BLOC1S2, BORCS5, BORCS6, BORCS7, BORCS8, KXD1 and SNAPIN.

It is found in the lysosome membrane. In terms of biological role, as part of the BORC complex may play a role in lysosomes movement and localization at the cell periphery. Associated with the cytosolic face of lysosomes, the BORC complex may recruit ARL8B and couple lysosomes to microtubule plus-end-directed kinesin motor. In Mus musculus (Mouse), this protein is BLOC-1-related complex subunit 6.